A 326-amino-acid chain; its full sequence is HTH-type transcriptional regulator SyrM (326 aa).

Residues isoleucine 32–threonine 89 form the HTH lysR-type domain. Residues isoleucine 49–serine 68 constitute a DNA-binding region (H-T-H motif).

The protein belongs to the LysR transcriptional regulatory family.

Acts in trans to stimulate nod gene expression via nodD3 and exo gene expression via SyrA. In Rhizobium meliloti (strain 1021) (Ensifer meliloti), this protein is HTH-type transcriptional regulator SyrM (syrM).